A 477-amino-acid chain; its full sequence is Lactate utilization protein B (477 aa).

4Fe-4S ferredoxin-type domains follow at residues 304-334 and 353-382; these read GTQFQSILQCIRCAACVNVCPVYRQTGGHSY and YDTYKELPYASTLCGACTEACPVKIPLHDL. [4Fe-4S] cluster-binding residues include C313, C316, C319, C323, C366, C369, and C373. Residues 443-463 are disordered; the sequence is GPKPLQAWTNSRDFPMPDDEN.

It belongs to the LutB/YkgF family.

In terms of biological role, is involved in L-lactate degradation and allows cells to grow with lactate as the sole carbon source. Has probably a role as an electron transporter during oxidation of L-lactate. In Macrococcus caseolyticus (strain JCSC5402) (Macrococcoides caseolyticum), this protein is Lactate utilization protein B.